Consider the following 384-residue polypeptide: Mannitol-1-phosphate 5-dehydrogenase (384 aa).

Residue 3 to 14 coordinates NAD(+); the sequence is AVHFGAGNIGRG.

It belongs to the mannitol dehydrogenase family. In terms of assembly, monomer.

The catalysed reaction is D-mannitol 1-phosphate + NAD(+) = beta-D-fructose 6-phosphate + NADH + H(+). This Enterococcus faecalis (strain ATCC 700802 / V583) protein is Mannitol-1-phosphate 5-dehydrogenase (mtlD).